Here is a 490-residue protein sequence, read N- to C-terminus: Probable cytosol aminopeptidase (490 aa).

Residues Lys257 and Asp262 each contribute to the Mn(2+) site. Lys269 is an active-site residue. Positions 281, 341, and 343 each coordinate Mn(2+). Arg345 is a catalytic residue.

This sequence belongs to the peptidase M17 family. Requires Mn(2+) as cofactor.

It is found in the cytoplasm. The catalysed reaction is Release of an N-terminal amino acid, Xaa-|-Yaa-, in which Xaa is preferably Leu, but may be other amino acids including Pro although not Arg or Lys, and Yaa may be Pro. Amino acid amides and methyl esters are also readily hydrolyzed, but rates on arylamides are exceedingly low.. The enzyme catalyses Release of an N-terminal amino acid, preferentially leucine, but not glutamic or aspartic acids.. Presumably involved in the processing and regular turnover of intracellular proteins. Catalyzes the removal of unsubstituted N-terminal amino acids from various peptides. This chain is Probable cytosol aminopeptidase, found in Prochlorococcus marinus (strain AS9601).